The following is a 140-amino-acid chain: Transcription antitermination protein NusB (140 aa).

Belongs to the NusB family.

Functionally, involved in transcription antitermination. Required for transcription of ribosomal RNA (rRNA) genes. Binds specifically to the boxA antiterminator sequence of the ribosomal RNA (rrn) operons. In Elusimicrobium minutum (strain Pei191), this protein is Transcription antitermination protein NusB.